Reading from the N-terminus, the 61-residue chain is Probable tautomerase spyM18_1099 (61 aa).

Pro2 acts as the Proton acceptor; via imino nitrogen in catalysis.

It belongs to the 4-oxalocrotonate tautomerase family.

The protein is Probable tautomerase spyM18_1099 of Streptococcus pyogenes serotype M18 (strain MGAS8232).